The chain runs to 725 residues: Methionine--tRNA ligase (725 aa).

The 'HIGH' region signature appears at 27-37 (PYANGQIHIGH). Zn(2+) is bound by residues Cys158, Cys161, Cys171, and Cys174. Positions 348–352 (KMSKS) match the 'KMSKS' region motif. Lys351 is a binding site for ATP. Residues 619 to 725 (DFAKIDLRIA…SGAKPGMRVK (107 aa)) enclose the tRNA-binding domain.

The protein belongs to the class-I aminoacyl-tRNA synthetase family. MetG type 1 subfamily. In terms of assembly, homodimer. Zn(2+) is required as a cofactor.

It is found in the cytoplasm. The catalysed reaction is tRNA(Met) + L-methionine + ATP = L-methionyl-tRNA(Met) + AMP + diphosphate. Its function is as follows. Is required not only for elongation of protein synthesis but also for the initiation of all mRNA translation through initiator tRNA(fMet) aminoacylation. This chain is Methionine--tRNA ligase, found in Burkholderia pseudomallei (strain 1710b).